Here is a 462-residue protein sequence, read N- to C-terminus: tRNA-2-methylthio-N(6)-dimethylallyladenosine synthase (462 aa).

The region spanning 2-117 is the MTTase N-terminal domain; sequence KRYFIHTFGC…LPDIIGRVSA (116 aa). Residues C11, C47, C80, C157, C161, and C164 each contribute to the [4Fe-4S] cluster site. The region spanning 143-372 is the Radical SAM core domain; the sequence is SRGKVTEFVT…QKLQRRISGE (230 aa). Positions 375-437 constitute a TRAM domain; sequence AALVGSEVEV…PNQLAGKQVA (63 aa).

This sequence belongs to the methylthiotransferase family. MiaB subfamily. In terms of assembly, monomer. Requires [4Fe-4S] cluster as cofactor.

The protein resides in the cytoplasm. The enzyme catalyses N(6)-dimethylallyladenosine(37) in tRNA + (sulfur carrier)-SH + AH2 + 2 S-adenosyl-L-methionine = 2-methylsulfanyl-N(6)-dimethylallyladenosine(37) in tRNA + (sulfur carrier)-H + 5'-deoxyadenosine + L-methionine + A + S-adenosyl-L-homocysteine + 2 H(+). In terms of biological role, catalyzes the methylthiolation of N6-(dimethylallyl)adenosine (i(6)A), leading to the formation of 2-methylthio-N6-(dimethylallyl)adenosine (ms(2)i(6)A) at position 37 in tRNAs that read codons beginning with uridine. This is tRNA-2-methylthio-N(6)-dimethylallyladenosine synthase from Myxococcus xanthus (strain DK1622).